We begin with the raw amino-acid sequence, 320 residues long: MYETRDLTGNAGKPVDTNPWPNNSKIAVSFVVNYEEGGERSLLYEDEGFETFLTEAGLMPFPNRPVRERSIESCFEYGSRCGFWRILNLFKKHKVPFTCWAIGQAVEKNPVVVGAMEEAGCEVGSHSHRWINYEGVPPETEYEHIKKSVQAIQKASPSNSAPRSWYTGRASLNTRKLVCQVYKDLGLPQPFDSDEYNDDYPYWVADPLASKPGAEDDKGLLIVPYTLEVNDMKYAVAPGFCNSDDFYTYARDAFDVLYEEGLEGAPKMMTIGLHCRLTGRPGRFRGLQKLMEHITSKEGVWVATREQIAQAWSAKHPYKA.

Residues 69-303 (RSIESCFEYG…ITSKEGVWVA (235 aa)) enclose the NodB homology domain.

This sequence belongs to the polysaccharide deacetylase family. In terms of assembly, homodimer.

Its subcellular location is the prospore. Functionally, may deacetylate chitin. Required for spore formation. This is Putative polysaccharide deacetylase from Schizosaccharomyces pombe (strain 972 / ATCC 24843) (Fission yeast).